We begin with the raw amino-acid sequence, 373 residues long: tRNA-specific 2-thiouridylase MnmA (373 aa).

ATP is bound by residues 12-19 (GMSGGVDS) and Met38. The interval 98–100 (NPD) is interaction with target base in tRNA. Cys103 acts as the Nucleophile in catalysis. An intrachain disulfide couples Cys103 to Cys200. Gly127 serves as a coordination point for ATP. Positions 150-152 (KDQ) are interaction with tRNA. The active-site Cysteine persulfide intermediate is Cys200. Positions 312 to 313 (RY) are interaction with tRNA.

This sequence belongs to the MnmA/TRMU family.

The protein resides in the cytoplasm. The catalysed reaction is S-sulfanyl-L-cysteinyl-[protein] + uridine(34) in tRNA + AH2 + ATP = 2-thiouridine(34) in tRNA + L-cysteinyl-[protein] + A + AMP + diphosphate + H(+). Catalyzes the 2-thiolation of uridine at the wobble position (U34) of tRNA, leading to the formation of s(2)U34. In Streptococcus uberis (strain ATCC BAA-854 / 0140J), this protein is tRNA-specific 2-thiouridylase MnmA.